We begin with the raw amino-acid sequence, 392 residues long: Putative non-inhibitory serpin-10 (392 aa).

An RCL region spans residues 333–357 (GTTAVEATYSCCSPTYSGPESPKPR).

The protein belongs to the serpin family.

This chain is Putative non-inhibitory serpin-10, found in Oryza sativa subsp. japonica (Rice).